Here is a 222-residue protein sequence, read N- to C-terminus: Small ribosomal subunit protein uS2 (222 aa).

Belongs to the universal ribosomal protein uS2 family.

This Karelsulcia muelleri (strain GWSS) (Sulcia muelleri) protein is Small ribosomal subunit protein uS2.